The following is a 488-amino-acid chain: MTKNNEAGWNLDHSYTTLPQSFYTEIPPTPVSSPELVKLNHSLAISLGFHPEELKKEAEIAIFAGNALPEGAHPLAQAYAGHQFGHFNMLGDGRALLIGEQITPSGKRFDIQLKGSGPTPYSRRGDGRAALGPMLREYIISEAMYALDIPTTRSLAVVTTGEPTYRETKLPGAILTRVASSHIRVGTFQYAAARGSIEDLQSLADYTIKRHYPEIEAHENRYTALLQEVIKKQASLIAKWQLVGFIHGVMNTDNITISGETIDYGPCAFMDNYDQGTVFSSIDTQGRYAYGNQPYMAAWDLARLAESLIPILHEDEEEALKIAQDEISKFSVQYENQWFLGMKKKLGLFSNEEQDQSLIEQLLKMMEKFKADYTNTFRSLTLNTIENTALFESPEFKEWYKLWQSRLERQEESKENAYEMMKNNNPSIIPRNHRVEEALEAAVTSGDYSVMEKLLEALSNPYAYSADQEDYCAPPAPTNRPYRTFCGT.

Residues G91, G93, R94, K114, D126, G127, R177, and R184 each coordinate ATP. Catalysis depends on D253, which acts as the Proton acceptor. Mg(2+) is bound by residues N254 and D263. Residue D263 participates in ATP binding.

It belongs to the SELO family. Requires Mg(2+) as cofactor. It depends on Mn(2+) as a cofactor.

The enzyme catalyses L-seryl-[protein] + ATP = 3-O-(5'-adenylyl)-L-seryl-[protein] + diphosphate. It catalyses the reaction L-threonyl-[protein] + ATP = 3-O-(5'-adenylyl)-L-threonyl-[protein] + diphosphate. The catalysed reaction is L-tyrosyl-[protein] + ATP = O-(5'-adenylyl)-L-tyrosyl-[protein] + diphosphate. It carries out the reaction L-histidyl-[protein] + UTP = N(tele)-(5'-uridylyl)-L-histidyl-[protein] + diphosphate. The enzyme catalyses L-seryl-[protein] + UTP = O-(5'-uridylyl)-L-seryl-[protein] + diphosphate. It catalyses the reaction L-tyrosyl-[protein] + UTP = O-(5'-uridylyl)-L-tyrosyl-[protein] + diphosphate. Functionally, nucleotidyltransferase involved in the post-translational modification of proteins. It can catalyze the addition of adenosine monophosphate (AMP) or uridine monophosphate (UMP) to a protein, resulting in modifications known as AMPylation and UMPylation. This chain is Protein nucleotidyltransferase YdiU, found in Bacillus cereus (strain ZK / E33L).